Here is a 504-residue protein sequence, read N- to C-terminus: Tegument protein VP16 homolog (504 aa).

Disordered stretches follow at residues 354–381, 395–421, and 435–486; these read EAGG…RLQR, ATPR…QGRR, and RSGP…ANPF. A compositionally biased stretch (low complexity) spans 361–378; it reads RSGSTRTRGRAARSTTGR. Low complexity predominate over residues 447 to 460; sequence PVRSGLGLSRARGS.

It belongs to the herpesviridae tegument protein VP16 protein family. In terms of assembly, associates with the VP16-induced complex; binding to host HCFC1 activates VP16 for association with the octamer motif-binding host protein POU2F1, to form a multiprotein-DNA complex responsible for activating transcription of the viral immediate early genes.

The protein resides in the virion tegument. The protein localises to the host nucleus. In terms of biological role, transcriptional activator of immediate-early (IE) gene products (alpha genes). Acts as a key activator of lytic infection by initiating the lytic program through the assembly of the transcriptional regulatory VP16-induced complex composed of VP16 and two cellular factors, HCFC1 and POU2F1. VP16-induced complex represents a regulatory switch: when it is on, it promotes IE-gene expression and thus lytic infection, and when it is off, it limits IE-gene transcription favoring latent infection. May play a role in the aggregation of tegument proteins around nucleocapsids during virus morphogenesis. The sequence is that of Tegument protein VP16 homolog from Bos taurus (Bovine).